The chain runs to 424 residues: UDP-N-acetylglucosamine 1-carboxyvinyltransferase (424 aa).

22-23 (KN) is a phosphoenolpyruvate binding site. Arg93 provides a ligand contact to UDP-N-acetyl-alpha-D-glucosamine. Residue Cys117 is the Proton donor of the active site. At Cys117 the chain carries 2-(S-cysteinyl)pyruvic acid O-phosphothioketal. Residues 122-126 (RPVDL), 162-165 (KVSV), Asp307, and Ile329 contribute to the UDP-N-acetyl-alpha-D-glucosamine site.

It belongs to the EPSP synthase family. MurA subfamily.

The protein resides in the cytoplasm. The enzyme catalyses phosphoenolpyruvate + UDP-N-acetyl-alpha-D-glucosamine = UDP-N-acetyl-3-O-(1-carboxyvinyl)-alpha-D-glucosamine + phosphate. It functions in the pathway cell wall biogenesis; peptidoglycan biosynthesis. Its function is as follows. Cell wall formation. Adds enolpyruvyl to UDP-N-acetylglucosamine. The polypeptide is UDP-N-acetylglucosamine 1-carboxyvinyltransferase (Haemophilus influenzae (strain PittGG)).